We begin with the raw amino-acid sequence, 256 residues long: MSVAIRVIPCLDVDAGRVVKGVNFADLRDAGDPVELARRYDGAGADELTFLDVTATSGNRETTFEMVARAAEEVFIPLTVGGGVREVADVDRLLRAGADKASINSAAVARPEVIDEITRHFGSQVLVLSLDARRVADGSTPSGFEVTTHGGRRGTGIDAVLWAREAADRGVGEILLNSIDADGTKAGFDLEMIRAVRAAVRVPLIASGGAGKPEDFPPAVQAGADAVLAASIFHFGPVDAIAQVKAAIRAAGFPVR.

Catalysis depends on residues D12 and D131.

This sequence belongs to the HisA/HisF family. Heterodimer of HisH and HisF.

It is found in the cytoplasm. It carries out the reaction 5-[(5-phospho-1-deoxy-D-ribulos-1-ylimino)methylamino]-1-(5-phospho-beta-D-ribosyl)imidazole-4-carboxamide + L-glutamine = D-erythro-1-(imidazol-4-yl)glycerol 3-phosphate + 5-amino-1-(5-phospho-beta-D-ribosyl)imidazole-4-carboxamide + L-glutamate + H(+). The protein operates within amino-acid biosynthesis; L-histidine biosynthesis; L-histidine from 5-phospho-alpha-D-ribose 1-diphosphate: step 5/9. Functionally, IGPS catalyzes the conversion of PRFAR and glutamine to IGP, AICAR and glutamate. The HisF subunit catalyzes the cyclization activity that produces IGP and AICAR from PRFAR using the ammonia provided by the HisH subunit. This chain is Imidazole glycerol phosphate synthase subunit HisF, found in Renibacterium salmoninarum (strain ATCC 33209 / DSM 20767 / JCM 11484 / NBRC 15589 / NCIMB 2235).